A 253-amino-acid polypeptide reads, in one-letter code: MLDFFSKKGNEDSEEIVLIEDKMPKHIAIIMDGNGRWAKKRGLPRTMGHRAGVKTIKTIVKECDKLGVKYLTLYAFSTENWKRPEDEVNALMKLVVEFIKNEIDELHQNGVRVQTIGDLSRFPEEPKKAILWAMEKTKDNTGVVLSLALNYGGRNEIVRGIKSVIEDVKAGKISIDDINEDMFNDYLYTKGMPDPDLIIRPSGEQRLSNFLLWQCAYSEFWYSQINWPDFNGEDLRKAIFDYQNRDRRFGGIK.

Residue Asp-32 is part of the active site. Asp-32 lines the Mg(2+) pocket. Residues 33–36, Trp-37, Arg-45, His-49, and 77–79 contribute to the substrate site; these read GNGR and STE. The Proton acceptor role is filled by Asn-80. Residues Trp-81, Arg-83, Arg-200, and 206–208 each bind substrate; that span reads RLS. Glu-219 serves as a coordination point for Mg(2+).

It belongs to the UPP synthase family. As to quaternary structure, homodimer. Mg(2+) is required as a cofactor.

Catalyzes the condensation of isopentenyl diphosphate (IPP) with allylic pyrophosphates generating different type of terpenoids. This is Isoprenyl transferase from Clostridium perfringens (strain 13 / Type A).